The primary structure comprises 421 residues: MQDSIEQYMQKVGQQARDASRVLTSASTSLKNHALSAIYTALENNQAAILAANQIDMEKGRSNQLDSALLDRLELTPARFKGMLQGLKDVIALVDPIGEITDLAYRPTGIQIGKMRVPLGVVGMIYESRPNVTLEAASLAIKSGNAIILRGGSEALESNKAIAEAVKHGLKVAGLPEHSVQVIETSDRAAVGHLITMAEYVDVIVPRGGKSLIERVTNEARIPVIKHLDGNCHVFVEAQADLQKALPITLNAKTHRYGVCNAMETLLVDEKIAEVFLPHIAELYAEKQVELRGCPETRRILGSSVKPATEEDWYTEYLGPILAVKVVSGIDEAIDHINKYGSHHTDAIVTENYTLARQFLARVDSSSVVVNASTRFADGFEYGLGAEIGISTDKIHARGPVGLEGLTSQKWIVLGDGQIRQ.

It belongs to the gamma-glutamyl phosphate reductase family.

Its subcellular location is the cytoplasm. The catalysed reaction is L-glutamate 5-semialdehyde + phosphate + NADP(+) = L-glutamyl 5-phosphate + NADPH + H(+). It functions in the pathway amino-acid biosynthesis; L-proline biosynthesis; L-glutamate 5-semialdehyde from L-glutamate: step 2/2. Its function is as follows. Catalyzes the NADPH-dependent reduction of L-glutamate 5-phosphate into L-glutamate 5-semialdehyde and phosphate. The product spontaneously undergoes cyclization to form 1-pyrroline-5-carboxylate. This is Gamma-glutamyl phosphate reductase from Acinetobacter baumannii (strain AYE).